The chain runs to 156 residues: uncharacterized protein (156 aa).

2 helical membrane passes run 46–66 and 114–134; these read GLVL…AGVV and IIDI…IVAL.

It localises to the cell membrane. This is an uncharacterized protein from Haemophilus influenzae (strain ATCC 51907 / DSM 11121 / KW20 / Rd).